The following is a 442-amino-acid chain: tRNA-2-methylthio-N(6)-dimethylallyladenosine synthase (442 aa).

In terms of domain architecture, MTTase N-terminal spans 3 to 120 (NKLYIRTFGC…LPNMLNDALN (118 aa)). [4Fe-4S] cluster is bound by residues Cys12, Cys49, Cys83, Cys157, Cys161, and Cys164. A Radical SAM core domain is found at 143 to 375 (RTNSVTAFVS…QKTINNNTEH (233 aa)). The 63-residue stretch at 378 to 440 (QLMIGSIQKV…GNSLMGDLLT (63 aa)) folds into the TRAM domain.

Belongs to the methylthiotransferase family. MiaB subfamily. As to quaternary structure, monomer. Requires [4Fe-4S] cluster as cofactor.

It localises to the cytoplasm. The catalysed reaction is N(6)-dimethylallyladenosine(37) in tRNA + (sulfur carrier)-SH + AH2 + 2 S-adenosyl-L-methionine = 2-methylsulfanyl-N(6)-dimethylallyladenosine(37) in tRNA + (sulfur carrier)-H + 5'-deoxyadenosine + L-methionine + A + S-adenosyl-L-homocysteine + 2 H(+). Its function is as follows. Catalyzes the methylthiolation of N6-(dimethylallyl)adenosine (i(6)A), leading to the formation of 2-methylthio-N6-(dimethylallyl)adenosine (ms(2)i(6)A) at position 37 in tRNAs that read codons beginning with uridine. The chain is tRNA-2-methylthio-N(6)-dimethylallyladenosine synthase from Vesicomyosocius okutanii subsp. Calyptogena okutanii (strain HA).